The sequence spans 107 residues: Putative antitoxin VapB5 (107 aa).

A run of 2 helical transmembrane segments spans residues 3–23 and 65–85; these read GPVI…ILLA and LIIL…AYLY.

The protein resides in the cell membrane. Possibly the antitoxin component of a type II toxin-antitoxin (TA) system. Its cognate toxin is VapC5 (Potential). This is Putative antitoxin VapB5 (vapB5) from Methanocaldococcus jannaschii (strain ATCC 43067 / DSM 2661 / JAL-1 / JCM 10045 / NBRC 100440) (Methanococcus jannaschii).